A 626-amino-acid polypeptide reads, in one-letter code: Cysteine desulfurase (626 aa).

Disordered regions lie at residues 1 to 21 and 41 to 64; these read MTNT…SDPF and AGVS…PTTS. The segment at 1-225 is cargo-loading domain; sequence MTNTVPSVPA…AGAVGFDIHQ (225 aa). Residues 226-626 form a cysteine desulfurase domain region; the sequence is VRRDFPILQE…RRIQTGSLAL (401 aa). Lys444 is modified (N6-(pyridoxal phosphate)lysine). Cys582 acts as the Cysteine persulfide intermediate in catalysis.

This sequence belongs to the class-V pyridoxal-phosphate-dependent aminotransferase family. Csd subfamily. There are 1-2 copies of this protein in each type 2A encapsulin shell. It depends on pyridoxal 5'-phosphate as a cofactor.

The protein resides in the encapsulin nanocompartment. It catalyses the reaction (sulfur carrier)-H + L-cysteine = (sulfur carrier)-SH + L-alanine. Encapsulated enzyme is 7-fold more active than encapsulated enzyme. Functionally, cargo protein of a type 2A encapsulin nanocompartment probably involved in sulfur metabolism. Cysteine desulfurases mobilize the sulfur from L-cysteine to yield L-alanine, an essential step in sulfur metabolism for biosynthesis of a variety of sulfur-containing biomolecules. The polypeptide is Cysteine desulfurase (Synechococcus elongatus (strain ATCC 33912 / PCC 7942 / FACHB-805) (Anacystis nidulans R2)).